Here is a 968-residue protein sequence, read N- to C-terminus: RNA polymerase-associated protein RapA (968 aa).

Residues 163–332 (EVGQRFAPRV…FARLRLLDPD (170 aa)) form the Helicase ATP-binding domain. Residue 176–183 (DEVGLGKT) participates in ATP binding. A DEAH box motif is present at residues 278 to 281 (DEAH). Residues 491 to 678 (RVDWLIDFLK…NTKSRYQELK (188 aa)) form the Helicase C-terminal domain.

This sequence belongs to the SNF2/RAD54 helicase family. RapA subfamily. In terms of assembly, interacts with the RNAP. Has a higher affinity for the core RNAP than for the holoenzyme. Its ATPase activity is stimulated by binding to RNAP.

Functionally, transcription regulator that activates transcription by stimulating RNA polymerase (RNAP) recycling in case of stress conditions such as supercoiled DNA or high salt concentrations. Probably acts by releasing the RNAP, when it is trapped or immobilized on tightly supercoiled DNA. Does not activate transcription on linear DNA. Probably not involved in DNA repair. In Shewanella piezotolerans (strain WP3 / JCM 13877), this protein is RNA polymerase-associated protein RapA.